The sequence spans 134 residues: Small ribosomal subunit protein uS11 (134 aa).

Belongs to the universal ribosomal protein uS11 family. Part of the 30S ribosomal subunit. Interacts with proteins S7 and S18. Binds to IF-3.

Its function is as follows. Located on the platform of the 30S subunit, it bridges several disparate RNA helices of the 16S rRNA. Forms part of the Shine-Dalgarno cleft in the 70S ribosome. This Micrococcus luteus (strain ATCC 4698 / DSM 20030 / JCM 1464 / CCM 169 / CCUG 5858 / IAM 1056 / NBRC 3333 / NCIMB 9278 / NCTC 2665 / VKM Ac-2230) (Micrococcus lysodeikticus) protein is Small ribosomal subunit protein uS11.